The sequence spans 205 residues: MDKSKVSTAVGGETPVGLITGSRDDELESGSMRTAETVLRLVPMAFCISALVLMLKNSQTNDFGTLSYSDLGAFRYLVHANGICAGYSLLSAIIVAMPRPSTMSRAWTFFFLDQVLTYVILAAAAVSVEALYLARKGDIAITWSAACVSFGGFCHKAITSAVITFIVVVCYALLSLVSSYKLFSRYGAPDVSYPGKGIEVAAFHS.

Residues 1 to 25 (MDKSKVSTAVGGETPVGLITGSRDD) form a disordered region. The Cytoplasmic portion of the chain corresponds to 1-34 (MDKSKVSTAVGGETPVGLITGSRDDELESGSMRT). Residues 35 to 55 (AETVLRLVPMAFCISALVLML) form a helical membrane-spanning segment. Topologically, residues 56 to 76 (KNSQTNDFGTLSYSDLGAFRY) are extracellular. A helical membrane pass occupies residues 77–97 (LVHANGICAGYSLLSAIIVAM). The Cytoplasmic segment spans residues 98 to 105 (PRPSTMSR). The helical transmembrane segment at 106 to 126 (AWTFFFLDQVLTYVILAAAAV) threads the bilayer. Residues 127 to 156 (SVEALYLARKGDIAITWSAACVSFGGFCHK) lie on the Extracellular side of the membrane. The helical transmembrane segment at 157–177 (AITSAVITFIVVVCYALLSLV) threads the bilayer. Topologically, residues 178–205 (SSYKLFSRYGAPDVSYPGKGIEVAAFHS) are cytoplasmic.

This sequence belongs to the Casparian strip membrane proteins (CASP) family. In terms of assembly, homodimer and heterodimers.

It localises to the cell membrane. This chain is CASP-like protein 2A1, found in Ricinus communis (Castor bean).